The following is a 202-amino-acid chain: MKLTARQSQVLDIIRRYVDETGYPPTRAEIAAELGFRSANAAEEHLRALARKGAIEMVPGASRGIRLPEAEEDLGLPVIGQVAAGSPILAQEHIEDHCTLQPGFFSPSADYLLRVRGMSMKDIGILDGDLLAVHSTQDVHNGQIVVARVGEEVTVKRFRREGNKVWLIAENEEFAPIEVDLAEQELFIEGLGVGVIRRSDLH.

A DNA-binding region (H-T-H motif) is located at residues 27 to 47; it reads RAEIAAELGFRSANAAEEHLR. Catalysis depends on for autocatalytic cleavage activity residues Ser119 and Lys156.

It belongs to the peptidase S24 family. In terms of assembly, homodimer.

The enzyme catalyses Hydrolysis of Ala-|-Gly bond in repressor LexA.. Its function is as follows. Represses a number of genes involved in the response to DNA damage (SOS response), including recA and lexA. In the presence of single-stranded DNA, RecA interacts with LexA causing an autocatalytic cleavage which disrupts the DNA-binding part of LexA, leading to derepression of the SOS regulon and eventually DNA repair. This Marinobacter nauticus (strain ATCC 700491 / DSM 11845 / VT8) (Marinobacter aquaeolei) protein is LexA repressor.